The sequence spans 216 residues: Cyclic AMP receptor protein (216 aa).

6–126 (LFHGLAPEEV…HNLAALLARR (121 aa)) provides a ligand contact to a nucleoside 3',5'-cyclic phosphate. Residues 75–78 (GEMS) and 85–86 (RS) contribute to the 3',5'-cyclic AMP site. An HTH crp-type domain is found at 140 to 206 (EEARNRVAYA…PGTVEVREAA (67 aa)). Residues 166–185 (HHELAALAGTSRETVSRVLH) constitute a DNA-binding region (H-T-H motif).

As to quaternary structure, homodimer.

Functionally, activates transcription. Positively regulates six promoters upstream of the TTHB186, TTHB147, TTHB178, TTHB159, TTHA0771 and TTHA0176 genes in a cAMP-dependent manner. Regulated genes include clustered regularly interspaced short palindromic repeat (CRISPR) associated (Cas) genes, and the genes encoding a putative transcriptional regulator, a protein containing the exonuclease III-like domain of DNA polymerase, a GCN5-related acetyltransferase homolog, and some T.thermophilus-specific proteins of unknown function. The consensus DNA-binding site of this transcriptional regulator is 5'-(CT)NNG(G/T)(G/T)C(A/C)N(A/T)NNTCACAN(G/C)(G/C)-3' in which N is G, A, T or C. The polypeptide is Cyclic AMP receptor protein (Thermus thermophilus (strain ATCC 27634 / DSM 579 / HB8)).